The sequence spans 390 residues: Tryptophan synthase beta chain (390 aa).

Position 90 is an N6-(pyridoxal phosphate)lysine (lysine 90).

It belongs to the TrpB family. Tetramer of two alpha and two beta chains. It depends on pyridoxal 5'-phosphate as a cofactor.

It carries out the reaction (1S,2R)-1-C-(indol-3-yl)glycerol 3-phosphate + L-serine = D-glyceraldehyde 3-phosphate + L-tryptophan + H2O. It participates in amino-acid biosynthesis; L-tryptophan biosynthesis; L-tryptophan from chorismate: step 5/5. In terms of biological role, the beta subunit is responsible for the synthesis of L-tryptophan from indole and L-serine. The sequence is that of Tryptophan synthase beta chain from Bacteroides fragilis (strain ATCC 25285 / DSM 2151 / CCUG 4856 / JCM 11019 / LMG 10263 / NCTC 9343 / Onslow / VPI 2553 / EN-2).